The sequence spans 257 residues: Zinc finger protein 8 (257 aa).

Disordered regions lie at residues 48 to 92 (GDNS…NNNN), 108 to 128 (QALGGHQNAHKRERQHAKRGS), and 214 to 238 (GVYSSSPASAFRSHEQETNKEPNNW). A compositionally biased stretch (polar residues) spans 50-65 (NSDNLSAEPSDHQTTT). The segment covering 66 to 92 (KNDESSENIKDKDKEKDKDKDKDNNNN) has biased composition (basic and acidic residues). The segment at 95 to 117 (FECHYCFRNFPTSQALGGHQNAH) adopts a C2H2-type zinc-finger fold. The span at 115 to 126 (NAHKRERQHAKR) shows a compositional bias: basic residues.

Expressed in developing cauline leaves.

Its subcellular location is the nucleus. Its function is as follows. Probable transcription factor required for the initiation of inflorescence trichomes in response to gibberellin and cytokinin. Is not involved in the regulation of trichome branching. Is functionally equivalent to GIS2. Acts as a negative regulator of abscisic acid (ABA) signaling during germination and early seedling development. The sequence is that of Zinc finger protein 8 from Arabidopsis thaliana (Mouse-ear cress).